A 469-amino-acid chain; its full sequence is Transcription factor phomD (469 aa).

Positions 14–41 (CNACNESKVRCSQRKPTCARCERNGVEC) form a DNA-binding region, zn(2)-C6 fungal-type. Positions 49-118 (THKDAPPISM…QQKEEAAAAA (70 aa)) are disordered. Over residues 82-93 (KANSNSSSNWHM) the composition is skewed to polar residues. The segment covering 104 to 118 (QQQQQQQKEEAAAAA) has biased composition (low complexity).

The protein resides in the nucleus. Functionally, transcription factor; part of the gene cluster that mediates the biosynthesis of the phomopsins, a group of hexapeptide mycotoxins which infects lupins and causes lupinosis disease in livestock. May play a role in the regulation of the production of phomopsins. The sequence is that of Transcription factor phomD from Diaporthe leptostromiformis (Lupinosis disease fungus).